The following is a 278-amino-acid chain: Alcohol dehydrogenase-related 31 kDa protein (278 aa).

11–34 lines the NAD(+) pocket; the sequence is YVADCGGIALETSKVLMTKNIAKL. Serine 139 is a substrate binding site. The Proton acceptor role is filled by tyrosine 152.

Belongs to the short-chain dehydrogenases/reductases (SDR) family.

This is Alcohol dehydrogenase-related 31 kDa protein (Adhr) from Drosophila pseudoobscura pseudoobscura (Fruit fly).